The primary structure comprises 113 residues: Pancreatic progenitor cell differentiation and proliferation factor B (113 aa).

It belongs to the PPDPF family.

Functionally, probable regulator of exocrine pancreas development. The chain is Pancreatic progenitor cell differentiation and proliferation factor B (ppdpf-b) from Xenopus laevis (African clawed frog).